A 470-amino-acid chain; its full sequence is Aspartate-semialdehyde dehydrogenase 1 (470 aa).

The NAD(+) site is built by Thr145 and Lys171. Asp243 is an active-site residue. NAD(+) is bound at residue Gly245. The active site involves Cys277. Glu371 serves as a coordination point for NAD(+).

Belongs to the aldehyde dehydrogenase family.

The enzyme catalyses L-aspartate 4-semialdehyde + NAD(+) + H2O = L-aspartate + NADH + 2 H(+). Dehydrogenase involved in the degradation of canavanine, the delta-oxa-analog of arginine, allowing growth on canavanine as sole nitrogen and carbon source. Probably catalyzes the NAD(+)-dependent oxidation of L-aspartate-semialdehyde to L-aspartate. The sequence is that of Aspartate-semialdehyde dehydrogenase 1 from Pseudomonas canavaninivorans.